Reading from the N-terminus, the 173-residue chain is MKKNRLLFRVIILLILCGAVGFTLYQGFFADKEKMQIGKEAPNFVVTDLEGKKIELKDLKGKGVFLNFWGTWCKPCEKEMPYMNELYPKYKEKGVEIIALDADETEIAVKNFVKQYDLKFPVAIDKGTKIIGTYSVGPLPTSFLIDKDGKVVEKIIGEQTKEQLEGYLQKITP.

A helical; Signal-anchor for type II membrane protein transmembrane segment spans residues 10–29; it reads VIILLILCGAVGFTLYQGFF. In terms of domain architecture, Thioredoxin spans 35–173; the sequence is MQIGKEAPNF…LEGYLQKITP (139 aa). Cysteine 73 and cysteine 76 are joined by a disulfide.

The protein belongs to the thioredoxin family. ResA subfamily.

It localises to the cell membrane. Its pathway is protein modification; cytochrome c assembly. Its function is as follows. Thiol-disulfide oxidoreductase which is required in disulfide reduction during c-type cytochrome synthesis. May accept reducing equivalents from CcdA, leading to breakage of disulfide bonds in apocytochrome c; following this reduction heme can be covalently attached. In Bacillus cereus (strain ZK / E33L), this protein is Thiol-disulfide oxidoreductase ResA.